We begin with the raw amino-acid sequence, 62 residues long: Large ribosomal subunit protein bL28 (62 aa).

Positions 1–26 (MARKCYVTGKSPKSGNNRSHALNKTK) are disordered. Over residues 11 to 20 (SPKSGNNRSH) the composition is skewed to polar residues.

Belongs to the bacterial ribosomal protein bL28 family.

This is Large ribosomal subunit protein bL28 from Exiguobacterium sibiricum (strain DSM 17290 / CCUG 55495 / CIP 109462 / JCM 13490 / 255-15).